The chain runs to 87 residues: Small ribosomal subunit protein bS20 (87 aa).

Residues 1 to 10 are compositionally biased toward basic residues; it reads MANIKSKQKR. Residues 1–27 are disordered; sequence MANIKSKQKRILTNEKSRQRNKSVRSA.

Belongs to the bacterial ribosomal protein bS20 family.

Functionally, binds directly to 16S ribosomal RNA. This is Small ribosomal subunit protein bS20 from Corynebacterium aurimucosum (strain ATCC 700975 / DSM 44827 / CIP 107346 / CN-1) (Corynebacterium nigricans).